We begin with the raw amino-acid sequence, 911 residues long: Eukaryotic translation initiation factor 3 subunit C (911 aa).

2 disordered regions span residues 1–38 and 155–181; these read MSRF…DDEE and SRFR…GEAA. The span at 11–20 shows a compositional bias: acidic residues; that stretch reads SESESSEEEV. A compositionally biased stretch (polar residues) spans 23 to 32; that stretch reads PNFNKASAFQ. A phosphoserine mark is found at serine 34, serine 165, serine 175, and serine 184. Residues 162-171 are compositionally biased toward acidic residues; the sequence is DQESEAEDEE. A compositionally biased stretch (low complexity) spans 196–208; the sequence is APKIAKSAPAKSV. Residues 196–284 are disordered; sequence APKIAKSAPA…KRAEDDEDGE (89 aa). Positions 210–236 are enriched in acidic residues; the sequence is ADDEDSDDSIDWDSDSESETESSEDEN. A compositionally biased stretch (basic and acidic residues) spans 241-271; the sequence is MRERFLKRSTEKGEDKGDDDKRKDKRKEQKL. The 177-residue stretch at 642-818 folds into the PCI domain; the sequence is FHMHINLELL…ETVVMHRSEP (177 aa). Residues 851–911 form a disordered region; sequence FQRGNMGNRG…QQQVQTIDEE (61 aa). Over residues 885–896 the composition is skewed to basic residues; it reads QRNRNQRGHHKN. The segment covering 897-911 has biased composition (low complexity); that stretch reads QQQQQQQQVQTIDEE.

This sequence belongs to the eIF-3 subunit C family. Component of the eukaryotic translation initiation factor 3 (eIF-3) complex. The eIF-3 complex interacts with pix.

It is found in the cytoplasm. In terms of biological role, component of the eukaryotic translation initiation factor 3 (eIF-3) complex, which is involved in protein synthesis of a specialized repertoire of mRNAs and, together with other initiation factors, stimulates binding of mRNA and methionyl-tRNAi to the 40S ribosome. The eIF-3 complex specifically targets and initiates translation of a subset of mRNAs involved in cell proliferation. The chain is Eukaryotic translation initiation factor 3 subunit C from Drosophila pseudoobscura pseudoobscura (Fruit fly).